Reading from the N-terminus, the 2205-residue chain is Genome polyprotein (2205 aa).

Gly-2 carries N-myristoyl glycine; by host lipidation. The Cytoplasmic portion of the chain corresponds to Gly-2–Gln-1518. An amphipathic alpha-helix region spans residues Gly-579 to Leu-599. Over residues Pro-598–Pro-613 the composition is skewed to polar residues. The segment at Pro-598–Thr-619 is disordered. Residues His-899 and Asp-917 each act as for protease 2A activity in the active site. Positions 934 and 936 each coordinate Zn(2+). Catalysis depends on Cys-988, which acts as the For protease 2A activity. Residues Cys-994 and His-996 each contribute to the Zn(2+) site. Positions Gly-1126 to Gln-1198 are membrane-binding. The segment at Gly-1126–Thr-1264 is oligomerization. The RNA-binding stretch occupies residues Ser-1147–Ser-1151. The 157-residue stretch at Glu-1230–Asn-1386 folds into the SF3 helicase domain. An ATP-binding site is contributed by Gly-1254–Ser-1261. Positions 1394, 1397, 1406, and 1411 each coordinate Zn(2+). A C4-type zinc finger spans residues Cys-1394 to Cys-1411. An RNA-binding region spans residues Glu-1438 to Ile-1445. The oligomerization stretch occupies residues Met-1449–Gln-1454. Residues Ala-1519 to Tyr-1534 lie within the membrane without spanning it. Over Lys-1535–Phe-2205 the chain is Cytoplasmic. Tyr-1544 carries the O-(5'-phospho-RNA)-tyrosine modification. The Peptidase C3 domain occupies Gly-1564 to Phe-1742. Residues His-1603, Glu-1634, and Cys-1710 each act as for protease 3C activity in the active site. Positions Met-1971–Leu-2086 constitute a RdRp catalytic domain. Mg(2+) contacts are provided by Asp-1977 and Asp-2072.

This sequence belongs to the picornaviruses polyprotein family. As to quaternary structure, interacts with capsid protein VP1 and capsid protein VP3 to form heterotrimeric protomers. In terms of assembly, interacts with capsid protein VP0, and capsid protein VP3 to form heterotrimeric protomers. Interacts with human PVR. Five protomers subsequently associate to form pentamers which serve as building blocks for the capsid. Interacts with capsid protein VP2, capsid protein VP3 and capsid protein VP4 following cleavage of capsid protein VP0. Interacts with capsid protein VP1 and capsid protein VP3 in the mature capsid. As to quaternary structure, interacts with capsid protein VP0 and capsid protein VP1 to form heterotrimeric protomers. Five protomers subsequently associate to form pentamers which serve as building blocks for the capsid. Interacts with capsid protein VP4 in the mature capsid. Interacts with protein 2C; this interaction may be important for virion morphogenesis. In terms of assembly, interacts with capsid protein VP1 and capsid protein VP3. Homodimer. As to quaternary structure, homohexamer; forms a hexameric ring structure with 6-fold symmetry characteristic of AAA+ ATPases. Interacts (via N-terminus) with host RTN3 (via reticulon domain); this interaction is important for viral replication. Interacts with capsid protein VP3; this interaction may be important for virion morphogenesis. In terms of assembly, interacts with protein 3CD. Homodimer. Interacts with host GBF1. Interacts (via GOLD domain) with host ACBD3 (via GOLD domain); this interaction allows the formation of a viral protein 3A/ACBD3 heterotetramer with a 2:2 stoichiometry, which will stimulate the recruitment of host PI4KB in order to synthesize PI4P at the viral RNA replication sites. As to quaternary structure, interacts with RNA-directed RNA polymerase. In terms of assembly, interacts with protein 3AB and with RNA-directed RNA polymerase. Interacts with Viral protein genome-linked and with protein 3CD. Mg(2+) serves as cofactor. In terms of processing, specific enzymatic cleavages in vivo by the viral proteases yield processing intermediates and the mature proteins. Myristoylation is required for the formation of pentamers during virus assembly. Further assembly of 12 pentamers and a molecule of genomic RNA generates the provirion. Post-translationally, during virion maturation, immature virions are rendered infectious following cleavage of VP0 into VP4 and VP2. This maturation seems to be an autocatalytic event triggered by the presence of RNA in the capsid and it is followed by a conformational change infectious virion. In terms of processing, myristoylation is required during RNA encapsidation and formation of the mature virus particle. VPg is uridylylated by the polymerase into VPg-pUpU. This acts as a nucleotide-peptide primer for the genomic RNA replication.

It is found in the virion. Its subcellular location is the host cytoplasm. The protein localises to the host cytoplasmic vesicle membrane. The protein resides in the host nucleus. The enzyme catalyses a ribonucleoside 5'-triphosphate + H2O = a ribonucleoside 5'-diphosphate + phosphate + H(+). The catalysed reaction is Selective cleavage of Tyr-|-Gly bond in the picornavirus polyprotein.. It catalyses the reaction RNA(n) + a ribonucleoside 5'-triphosphate = RNA(n+1) + diphosphate. It carries out the reaction Selective cleavage of Gln-|-Gly bond in the poliovirus polyprotein. In other picornavirus reactions Glu may be substituted for Gln, and Ser or Thr for Gly.. Its activity is regulated as follows. Replication or transcription is subject to high level of random mutations by the nucleotide analog ribavirin. Functionally, forms an icosahedral capsid of pseudo T=3 symmetry with capsid proteins VP2 and VP3. The capsid is 300 Angstroms in diameter, composed of 60 copies of each capsid protein and enclosing the viral positive strand RNA genome. Capsid protein VP1 mainly forms the vertices of the capsid. Capsid protein VP1 interacts with host cell receptor PVR to provide virion attachment to target host cells. This attachment induces virion internalization predominantly through clathrin- and caveolin-independent endocytosis in Hela cells and through caveolin-mediated endocytosis in brain microvascular endothelial cells. Tyrosine kinases are probably involved in the entry process. Virus binding to PVR induces increased junctional permeability and rearrangement of junctional proteins. Modulation of endothelial tight junctions, as well as cytolytic infection of endothelial cells themselves, may result in loss of endothelial integrity which may help the virus to reach the CNS. After binding to its receptor, the capsid undergoes conformational changes. Capsid protein VP1 N-terminus (that contains an amphipathic alpha-helix) and capsid protein VP4 are externalized. Together, they shape a pore in the host membrane through which viral genome is translocated to host cell cytoplasm. Forms an icosahedral capsid of pseudo T=3 symmetry with capsid proteins VP2 and VP3. The capsid is 300 Angstroms in diameter, composed of 60 copies of each capsid protein and enclosing the viral positive strand RNA genome. Its function is as follows. Lies on the inner surface of the capsid shell. After binding to the host receptor, the capsid undergoes conformational changes. Capsid protein VP4 is released, Capsid protein VP1 N-terminus is externalized, and together, they shape a pore in the host membrane through which the viral genome is translocated into the host cell cytoplasm. In terms of biological role, component of immature procapsids, which is cleaved into capsid proteins VP4 and VP2 after maturation. Allows the capsid to remain inactive before the maturation step. Functionally, cysteine protease that cleaves viral polyprotein and specific host proteins. It is responsible for the autocatalytic cleavage between the P1 and P2 regions, which is the first cleavage occurring in the polyprotein. Also cleaves the host translation initiation factor EIF4G1, in order to shut down the capped cellular mRNA translation. Inhibits the host nucleus-cytoplasm protein and RNA trafficking by cleaving host members of the nuclear pores including NUP98, NUP62 and NUP153. Counteracts stress granule formation probably by antagonizing its assembly or promoting its dissassembly. Cleaves and inhibits host IFIH1/MDA5, thereby inhibiting the type-I IFN production and the establishment of the antiviral state. Cleaves and inhibits host MAVS, thereby inhibiting the type-I IFN production and the establishment of the antiviral state. Plays an essential role in the virus replication cycle by acting as a viroporin. Creates a pore in the host endoplasmic reticulum and as a consequence releases Ca2+ in the cytoplasm of infected cell. In turn, high levels of cytoplasmic calcium may trigger membrane trafficking and transport of viral ER-associated proteins to viroplasms, sites of viral genome replication. Its function is as follows. Induces and associates with structural rearrangements of intracellular membranes. Displays RNA-binding, nucleotide binding and NTPase activities. May play a role in virion morphogenesis and viral RNA encapsidation by interacting with the capsid protein VP3. In terms of biological role, localizes the viral replication complex to the surface of membranous vesicles. Together with protein 3CD binds the Cis-Active RNA Element (CRE) which is involved in RNA synthesis initiation. Acts as a cofactor to stimulate the activity of 3D polymerase, maybe through a nucleid acid chaperone activity. Functionally, localizes the viral replication complex to the surface of membranous vesicles. It inhibits host cell endoplasmic reticulum-to-Golgi apparatus transport and causes the disassembly of the Golgi complex, possibly through GBF1 interaction. This would result in depletion of MHC, trail receptors and IFN receptors at the host cell surface. Plays an essential role in viral RNA replication by recruiting ACBD3 and PI4KB at the viral replication sites, thereby allowing the formation of the rearranged membranous structures where viral replication takes place. Acts as a primer for viral RNA replication and remains covalently bound to viral genomic RNA. VPg is uridylylated prior to priming replication into VPg-pUpU. The oriI viral genomic sequence may act as a template for this. The VPg-pUpU is then used as primer on the genomic RNA poly(A) by the RNA-dependent RNA polymerase to replicate the viral genome. During genome replication, the VPg-RNA linkage is removed by the host TDP2, thereby accelerating replication. During the late stage of the replication cycle, host TDP2 is excluded from sites of viral RNA synthesis and encapsidation, allowing for the generation of progeny virions. Its function is as follows. Involved in the viral replication complex and viral polypeptide maturation. It exhibits protease activity with a specificity and catalytic efficiency that is different from protease 3C. Protein 3CD lacks polymerase activity. Protein 3CD binds to the 5'UTR of the viral genome. In terms of biological role, major viral protease that mediates proteolytic processing of the polyprotein. Cleaves host EIF5B, contributing to host translation shutoff. Also cleaves host PABPC1, contributing to host translation shutoff. Cleaves host RIGI and thus contributes to the inhibition of type I interferon production. Cleaves host NLRP1, triggers host N-glycine-mediated degradation of the autoinhibitory NLRP1 N-terminal fragment. Inhibits the integrated stress response (ISR) in the infected cell by cleaving host G3BP1. Stress granule formation is thus inhibited, which allows protein synthesis and viral replication. Functionally, replicates the viral genomic RNA on the surface of intracellular membranes. May form linear arrays of subunits that propagate along a strong head-to-tail interaction called interface-I. Covalently attaches UMP to a tyrosine of VPg, which is used to prime RNA synthesis. The positive stranded RNA genome is first replicated at virus induced membranous vesicles, creating a dsRNA genomic replication form. This dsRNA is then used as template to synthesize positive stranded RNA genomes. ss(+)RNA genomes are either translated, replicated or encapsidated. The sequence is that of Genome polyprotein from Homo sapiens (Human).